A 434-amino-acid chain; its full sequence is Phosphomethylpyrimidine synthase 2 (434 aa).

Residues Met-94, Tyr-123, His-162, 184–186, 225–228, and Glu-264 each bind substrate; these read SRG and NAMR. His-268 lines the Zn(2+) pocket. Position 291 (Tyr-291) interacts with substrate. His-332 lines the Zn(2+) pocket. Cys-408, Cys-411, and Cys-415 together coordinate [4Fe-4S] cluster.

This sequence belongs to the ThiC family. The cofactor is [4Fe-4S] cluster.

The enzyme catalyses 5-amino-1-(5-phospho-beta-D-ribosyl)imidazole + S-adenosyl-L-methionine = 4-amino-2-methyl-5-(phosphooxymethyl)pyrimidine + CO + 5'-deoxyadenosine + formate + L-methionine + 3 H(+). Its pathway is cofactor biosynthesis; thiamine diphosphate biosynthesis. Its function is as follows. Catalyzes the synthesis of the hydroxymethylpyrimidine phosphate (HMP-P) moiety of thiamine from aminoimidazole ribotide (AIR) in a radical S-adenosyl-L-methionine (SAM)-dependent reaction. The polypeptide is Phosphomethylpyrimidine synthase 2 (Methanosphaera stadtmanae (strain ATCC 43021 / DSM 3091 / JCM 11832 / MCB-3)).